Consider the following 126-residue polypeptide: Profilin-3 (126 aa).

It belongs to the profilin family. As to quaternary structure, occurs in many kinds of cells as a complex with monomeric actin in a 1:1 ratio.

It is found in the cytoplasm. The protein localises to the cytoskeleton. Binds to actin and affects the structure of the cytoskeleton. At high concentrations, profilin prevents the polymerization of actin, whereas it enhances it at low concentrations. By binding to PIP2, it inhibits the formation of IP3 and DG. The chain is Profilin-3 (proC) from Dictyostelium discoideum (Social amoeba).